Here is a 276-residue protein sequence, read N- to C-terminus: Large ribosomal subunit protein uL2 (276 aa).

The disordered stretch occupies residues R221 to K276. Residues K252–K276 show a composition bias toward basic residues.

This sequence belongs to the universal ribosomal protein uL2 family. Part of the 50S ribosomal subunit. Forms a bridge to the 30S subunit in the 70S ribosome.

In terms of biological role, one of the primary rRNA binding proteins. Required for association of the 30S and 50S subunits to form the 70S ribosome, for tRNA binding and peptide bond formation. It has been suggested to have peptidyltransferase activity; this is somewhat controversial. Makes several contacts with the 16S rRNA in the 70S ribosome. This is Large ribosomal subunit protein uL2 from Aster yellows witches'-broom phytoplasma (strain AYWB).